The chain runs to 735 residues: Glutamine-dependent NAD(+) synthetase (735 aa).

A CN hydrolase domain is found at 4 to 274 (LRVATCNLNQ…VEVLDALVDL (271 aa)). Residue E44 is the Proton acceptor; for glutaminase activity of the active site. The active-site For glutaminase activity is K113. C174 functions as the Nucleophile; for glutaminase activity in the catalytic mechanism. A ligase region spans residues 324–711 (YHRPEEEIAF…STEGELRRRK (388 aa)). Residue 354–361 (PLSGGADS) participates in ATP binding. The active site involves S356.

In the C-terminal section; belongs to the NAD synthetase family.

It catalyses the reaction deamido-NAD(+) + L-glutamine + ATP + H2O = L-glutamate + AMP + diphosphate + NAD(+) + H(+). Its pathway is cofactor biosynthesis; NAD(+) biosynthesis; NAD(+) from deamido-NAD(+) (L-Gln route): step 1/1. The sequence is that of Glutamine-dependent NAD(+) synthetase from Oryza sativa subsp. indica (Rice).